The sequence spans 38 residues: MSGPNPNKEPVELNRTSLFWGLLLIFVLAVLFSSYFFN.

The chain crosses the membrane as a helical span at residues 17 to 37 (SLFWGLLLIFVLAVLFSSYFF).

Belongs to the PsbL family. PSII is composed of 1 copy each of membrane proteins PsbA, PsbB, PsbC, PsbD, PsbE, PsbF, PsbH, PsbI, PsbJ, PsbK, PsbL, PsbM, PsbT, PsbX, PsbY, PsbZ, Psb30/Ycf12, at least 3 peripheral proteins of the oxygen-evolving complex and a large number of cofactors. It forms dimeric complexes.

The protein localises to the plastid. It is found in the chloroplast thylakoid membrane. Functionally, one of the components of the core complex of photosystem II (PSII). PSII is a light-driven water:plastoquinone oxidoreductase that uses light energy to abstract electrons from H(2)O, generating O(2) and a proton gradient subsequently used for ATP formation. It consists of a core antenna complex that captures photons, and an electron transfer chain that converts photonic excitation into a charge separation. This subunit is found at the monomer-monomer interface and is required for correct PSII assembly and/or dimerization. The sequence is that of Photosystem II reaction center protein L from Gracilaria tenuistipitata var. liui (Red alga).